A 179-amino-acid chain; its full sequence is Peptidyl-tRNA hydrolase 2, mitochondrial (179 aa).

The chain crosses the membrane as a helical span at residues 15–37 (STLGLAVGVACGMCLGWSLRVCF). Residues Lys47, Lys76, Lys81, Lys95, Lys106, Lys115, Lys171, and Lys177 each participate in a glycyl lysine isopeptide (Lys-Gly) (interchain with G-Cter in ubiquitin) cross-link.

The protein belongs to the PTH2 family. In terms of assembly, monomer. Post-translationally, ubiquitinated by PRKN during mitophagy, leading to its degradation and enhancement of mitophagy. Deubiquitinated by USP30.

It localises to the mitochondrion outer membrane. It carries out the reaction an N-acyl-L-alpha-aminoacyl-tRNA + H2O = an N-acyl-L-amino acid + a tRNA + H(+). Functionally, peptidyl-tRNA hydrolase which releases tRNAs from the ribosome during protein synthesis. Promotes caspase-independent apoptosis by regulating the function of two transcriptional regulators, AES and TLE1. The polypeptide is Peptidyl-tRNA hydrolase 2, mitochondrial (PTRH2) (Homo sapiens (Human)).